The chain runs to 121 residues: Small ribosomal subunit protein uS13 (121 aa).

The segment at 93 to 121 (RGLPMRGQRTRTNARTRKGPRKSAAALKK) is disordered.

It belongs to the universal ribosomal protein uS13 family. In terms of assembly, part of the 30S ribosomal subunit. Forms a loose heterodimer with protein S19. Forms two bridges to the 50S subunit in the 70S ribosome.

Its function is as follows. Located at the top of the head of the 30S subunit, it contacts several helices of the 16S rRNA. In the 70S ribosome it contacts the 23S rRNA (bridge B1a) and protein L5 of the 50S subunit (bridge B1b), connecting the 2 subunits; these bridges are implicated in subunit movement. Contacts the tRNAs in the A and P-sites. This chain is Small ribosomal subunit protein uS13, found in Methylibium petroleiphilum (strain ATCC BAA-1232 / LMG 22953 / PM1).